A 1362-amino-acid chain; its full sequence is Bromodomain-containing protein 4B (1362 aa).

Disordered regions lie at residues 22–57 (EGAQMSGQQQPAQPQPQTPMMQTPPPEIARPNQPKR), 200–243 (SLGD…HPPA), 274–367 (LANH…DSKT), 476–639 (DEPE…SYEE), 699–941 (CLRK…TQSP), and 953–1349 (SQAP…MNFQ). Positions 34–49 (QPQPQTPMMQTPPPEI) are enriched in pro residues. The Bromo 1 domain occupies 57–163 (RQTNQLQYLL…KLFLQKISEM (107 aa)). A compositionally biased stretch (pro residues) spans 219–234 (TPTPPAVIRAPTPPQT). Residues 326–342 (PRKESGRQIRPIKKTEV) are compositionally biased toward basic and acidic residues. A compositionally biased stretch (pro residues) spans 348–358 (PAPPDLHPQPA). In terms of domain architecture, Bromo 2 spans 365-474 (SKTSEQLRYC…DVFEMRFAKM (110 aa)). The segment covering 481-503 (APAPVPSPAPGPPAPSIKIPPPT) has biased composition (pro residues). Positions 503-521 (TSSDTSSDSSSDSESSSDS) are NPS region. Positions 504–516 (SSDTSSDSSSDSE) are enriched in low complexity. Residues 542 to 597 (QLAALSQPQPNKPKKKEREKRKEKHKRKEEVEETRKGRIREPPAKKPKKSVQVSGG) are BID region. The segment covering 553 to 568 (KPKKKEREKRKEKHKR) has biased composition (basic residues). Residues 569–585 (KEEVEETRKGRIREPPA) show a composition bias toward basic and acidic residues. A compositionally biased stretch (pro residues) spans 606 to 621 (PPPVTRPARPAPPPAP). Positions 623-707 (ESSEEDTQRC…SCLRKKRKPQ (85 aa)) constitute an NET domain. Basic and acidic residues predominate over residues 628-639 (DTQRCRPMSYEE). Residues 722–737 (SYSSSESESSSESSTS) are compositionally biased toward low complexity. The segment covering 750-766 (QKKKGHSGRESRKHHHP) has biased composition (basic residues). 2 stretches are compositionally biased toward pro residues: residues 772-793 (IAPPPVMKPPSPTLAPSYPPPS) and 871-889 (PARPPSASPPLPPPQPHHQ). Residues 893–905 (HVHHHHHHHHHAQ) show a composition bias toward basic residues. The span at 926–941 (YLQQLHKSQQPPTQSP) shows a compositional bias: polar residues. Low complexity-rich tracts occupy residues 953–963 (SQAPMAAPAQS), 977–1006 (SSASPAPSPASSHIHQMQSPPVVPQQQPAG), 1014–1028 (QQQQQQQQQQHPALQ), and 1041–1050 (HQQAKQQQVI). Residues 1061–1361 (RQQKQETYPG…LMEIFEQNLF (301 aa)) are C-terminal (CTD) region. The segment covering 1086 to 1099 (QVPPYPGLTHPPSP) has biased composition (pro residues). The segment covering 1186–1207 (PEKEKQKQEPKTPVAPKKDLKI) has biased composition (basic and acidic residues). A compositionally biased stretch (polar residues) spans 1224–1234 (PTSAGKSTSDS). Basic and acidic residues predominate over residues 1236–1293 (ELFRRQAREKEERERALKHQAEQAERMRREQERMRTREDDDVQDQTRKAHEEARRRQE). The segment covering 1308–1319 (PAAPSPAQSSQP) has biased composition (low complexity). Residues 1322-1334 (DQREMARKREQER) show a composition bias toward basic and acidic residues.

It belongs to the BET family.

It localises to the nucleus. Its subcellular location is the chromosome. Chromatin reader protein that recognizes and binds acetylated histones and plays a key role in transmission of epigenetic memory across cell divisions and transcription regulation. Remains associated with acetylated chromatin throughout the entire cell cycle and provides epigenetic memory for postmitotic G1 gene transcription by preserving acetylated chromatin status and maintaining high-order chromatin structure. During interphase, plays a key role in regulating the transcription of signal-inducible genes by associating with the P-TEFb complex and recruiting it to promoters. This chain is Bromodomain-containing protein 4B (brd4-b), found in Xenopus laevis (African clawed frog).